The following is a 147-amino-acid chain: Nucleoside diphosphate kinase (147 aa).

Residues Lys9, Phe57, Arg85, Thr91, Arg102, and Asn112 each coordinate ATP. His115 acts as the Pros-phosphohistidine intermediate in catalysis.

It belongs to the NDK family. In terms of assembly, homotetramer. Requires Mg(2+) as cofactor.

The protein resides in the cytoplasm. It catalyses the reaction a 2'-deoxyribonucleoside 5'-diphosphate + ATP = a 2'-deoxyribonucleoside 5'-triphosphate + ADP. The enzyme catalyses a ribonucleoside 5'-diphosphate + ATP = a ribonucleoside 5'-triphosphate + ADP. Major role in the synthesis of nucleoside triphosphates other than ATP. The ATP gamma phosphate is transferred to the NDP beta phosphate via a ping-pong mechanism, using a phosphorylated active-site intermediate. The polypeptide is Nucleoside diphosphate kinase (Listeria monocytogenes serotype 4b (strain CLIP80459)).